We begin with the raw amino-acid sequence, 295 residues long: MSKDIATPGRTTEILKKYGFLFKKSLGQNFLIDSNILTRITDTAEITKETNVIEIGPGIGALTEQLAKTANEVVAFEIDQRLLPILDDTLSAYSNVQVVHGDVLKADVEEVVAEQFAKPELPLKIVANLPYYVTTPIILKLLHDNIPADSMTFMLQKEVADRISAVPSTKSYGSLTIAIQFYMEAELAFIVPKTVFMPQPNVDSAVIHLKRRKEPLAEVNDEEFFFEVTRASFAQRRKTLWNNLASKFPALKPRKDELVEGLNAIGIDLIRRGETLDIPEFAKLSNFLGDFLKEK.

Residues Asn-29, Leu-31, Gly-56, Glu-77, Asp-102, and Asn-128 each contribute to the S-adenosyl-L-methionine site.

Belongs to the class I-like SAM-binding methyltransferase superfamily. rRNA adenine N(6)-methyltransferase family. RsmA subfamily.

The protein localises to the cytoplasm. It carries out the reaction adenosine(1518)/adenosine(1519) in 16S rRNA + 4 S-adenosyl-L-methionine = N(6)-dimethyladenosine(1518)/N(6)-dimethyladenosine(1519) in 16S rRNA + 4 S-adenosyl-L-homocysteine + 4 H(+). Functionally, specifically dimethylates two adjacent adenosines (A1518 and A1519) in the loop of a conserved hairpin near the 3'-end of 16S rRNA in the 30S particle. May play a critical role in biogenesis of 30S subunits. The chain is Ribosomal RNA small subunit methyltransferase A from Listeria monocytogenes serotype 4a (strain HCC23).